The primary structure comprises 132 residues: MVKHQTQKKGVKRKQLKNIPSGVVHVKATFNNTIVSITDPAGNTISWASAGKVGYSGSRKSSAFAATMAAQDAAKNAMNSGLKEVEVCLKGTGAGRESAVRALIASGLVVSVIRDETPVPHNGCRPRKRRRV.

It belongs to the universal ribosomal protein uS11 family. In terms of assembly, part of the 30S ribosomal subunit. Interacts with proteins S7 and S18. Binds to IF-3.

In terms of biological role, located on the platform of the 30S subunit, it bridges several disparate RNA helices of the 16S rRNA. Forms part of the Shine-Dalgarno cleft in the 70S ribosome. In Chlamydia caviae (strain ATCC VR-813 / DSM 19441 / 03DC25 / GPIC) (Chlamydophila caviae), this protein is Small ribosomal subunit protein uS11.